Here is a 119-residue protein sequence, read N- to C-terminus: Large ribosomal subunit protein uL18 (119 aa).

This sequence belongs to the universal ribosomal protein uL18 family. In terms of assembly, part of the 50S ribosomal subunit; part of the 5S rRNA/L5/L18/L25 subcomplex. Contacts the 5S and 23S rRNAs.

Functionally, this is one of the proteins that bind and probably mediate the attachment of the 5S RNA into the large ribosomal subunit, where it forms part of the central protuberance. The protein is Large ribosomal subunit protein uL18 of Cereibacter sphaeroides (strain ATCC 17029 / ATH 2.4.9) (Rhodobacter sphaeroides).